The following is a 561-amino-acid chain: Tectonic-like complex member MKS1 (561 aa).

In terms of domain architecture, C2 B9-type spans 314-442 (LRLFVNGEVV…TVSTWRPMEL (129 aa)).

As to quaternary structure, part of the tectonic-like complex (also named B9 complex). Interacts with TMEM107. Interacts with TCTN3, AHI1, TCTN1, TCTN2, CC2D2A. Interacts with FLNA. Interacts with TMEM67. Interacts with B9D1 and B9D2. Widely expressed in embryo at 15.5 dpc, with a relatively strong expression in brain, liver, kidney and digits of the upper limbs. Highly expressed in bronchiolar epithelium.

The protein resides in the cytoplasm. It localises to the cytoskeleton. It is found in the cilium basal body. The protein localises to the microtubule organizing center. Its subcellular location is the centrosome. In terms of biological role, component of the tectonic-like complex, a complex localized at the transition zone of primary cilia and acting as a barrier that prevents diffusion of transmembrane proteins between the cilia and plasma membranes. Involved in centrosome migration to the apical cell surface during early ciliogenesis. Required for ciliary structure and function, including a role in regulating length and appropriate number through modulating centrosome duplication. Required for cell branching morphology. The protein is Tectonic-like complex member MKS1 (Mks1) of Mus musculus (Mouse).